The sequence spans 387 residues: Chorismate synthase (387 aa).

The NADP(+) site is built by arginine 39 and arginine 45. Residues 92-113 (PVEEGSEEKRRVSRPRPGHADL) form a disordered region. FMN is bound by residues 130 to 132 (RSS), 250 to 251 (QA), glycine 295, 310 to 314 (KPIPT), and arginine 336.

Belongs to the chorismate synthase family. In terms of assembly, homotetramer. It depends on FMNH2 as a cofactor.

The catalysed reaction is 5-O-(1-carboxyvinyl)-3-phosphoshikimate = chorismate + phosphate. The protein operates within metabolic intermediate biosynthesis; chorismate biosynthesis; chorismate from D-erythrose 4-phosphate and phosphoenolpyruvate: step 7/7. In terms of biological role, catalyzes the anti-1,4-elimination of the C-3 phosphate and the C-6 proR hydrogen from 5-enolpyruvylshikimate-3-phosphate (EPSP) to yield chorismate, which is the branch point compound that serves as the starting substrate for the three terminal pathways of aromatic amino acid biosynthesis. This reaction introduces a second double bond into the aromatic ring system. The polypeptide is Chorismate synthase (Brevibacillus brevis (strain 47 / JCM 6285 / NBRC 100599)).